The primary structure comprises 70 residues: Venom antimicrobial peptide-6 (70 aa).

A signal peptide spans Met-1–Ala-23. Phe-36 bears the Phenylalanine amide mark. Positions Ser-40–Tyr-70 are excised as a propeptide.

It belongs to the non-disulfide-bridged peptide (NDBP) superfamily. Short antimicrobial peptide (group 4) family. Expressed by the venom gland.

The protein resides in the secreted. It localises to the target cell membrane. Its function is as follows. Amphipathic peptide that exhibits extensive cytolytic activities against both prokaryotic and eukaryotic cells. Is more potent against Gram-positive bacteria (lethal concentration (LC)=0.25-2.9 uM) than against Gram-negative bacteria (LC=6.2-&gt;50 uM), and fungi ((LC)=14.1-&gt;50 uM). Shows hemolytic activity against rabbit erythrocytes (37.7% of inhibition at 6.25 uM) and cytolysis against rat dorsal root ganglions. In vivo, intravenous injection into mice tail provokes uncomfortable symptoms with a death rate of 12.5%. The chain is Venom antimicrobial peptide-6 from Mesobuthus eupeus (Lesser Asian scorpion).